Reading from the N-terminus, the 229-residue chain is Ribosomal RNA large subunit methyltransferase E (229 aa).

The tract at residues 1-20 (MSRAGNGGRQRIKTAKGRSA) is disordered. S-adenosyl-L-methionine contacts are provided by glycine 75, tryptophan 77, aspartate 94, aspartate 110, and aspartate 134. The active-site Proton acceptor is the lysine 174.

This sequence belongs to the class I-like SAM-binding methyltransferase superfamily. RNA methyltransferase RlmE family.

Its subcellular location is the cytoplasm. It catalyses the reaction uridine(2552) in 23S rRNA + S-adenosyl-L-methionine = 2'-O-methyluridine(2552) in 23S rRNA + S-adenosyl-L-homocysteine + H(+). In terms of biological role, specifically methylates the uridine in position 2552 of 23S rRNA at the 2'-O position of the ribose in the fully assembled 50S ribosomal subunit. The polypeptide is Ribosomal RNA large subunit methyltransferase E (Rhizorhabdus wittichii (strain DSM 6014 / CCUG 31198 / JCM 15750 / NBRC 105917 / EY 4224 / RW1) (Sphingomonas wittichii)).